The chain runs to 76 residues: Small ribosomal subunit protein bS18 (76 aa).

It belongs to the bacterial ribosomal protein bS18 family. Part of the 30S ribosomal subunit. Forms a tight heterodimer with protein bS6.

Functionally, binds as a heterodimer with protein bS6 to the central domain of the 16S rRNA, where it helps stabilize the platform of the 30S subunit. The chain is Small ribosomal subunit protein bS18 from Nitrosomonas europaea (strain ATCC 19718 / CIP 103999 / KCTC 2705 / NBRC 14298).